Here is a 715-residue protein sequence, read N- to C-terminus: Glycine--tRNA ligase beta subunit (715 aa).

This sequence belongs to the class-II aminoacyl-tRNA synthetase family. As to quaternary structure, tetramer of two alpha and two beta subunits.

It is found in the cytoplasm. It carries out the reaction tRNA(Gly) + glycine + ATP = glycyl-tRNA(Gly) + AMP + diphosphate. The chain is Glycine--tRNA ligase beta subunit from Nitrosomonas eutropha (strain DSM 101675 / C91 / Nm57).